Here is a 184-residue protein sequence, read N- to C-terminus: Ribosome-recycling factor (184 aa).

This sequence belongs to the RRF family.

Its subcellular location is the cytoplasm. In terms of biological role, responsible for the release of ribosomes from messenger RNA at the termination of protein biosynthesis. May increase the efficiency of translation by recycling ribosomes from one round of translation to another. The protein is Ribosome-recycling factor of Hyphomonas neptunium (strain ATCC 15444).